The following is a 483-amino-acid chain: Regulatory protein ViaA (483 aa).

The protein belongs to the ViaA family. Homodimer. Interacts with RavA.

It localises to the cytoplasm. Functionally, component of the RavA-ViaA chaperone complex, which may act on the membrane to optimize the function of some of the respiratory chains. ViaA stimulates the ATPase activity of RavA. This is Regulatory protein ViaA from Salmonella agona (strain SL483).